The sequence spans 229 residues: Large ribosomal subunit protein uL1 (229 aa).

The protein belongs to the universal ribosomal protein uL1 family. Part of the 50S ribosomal subunit.

Its function is as follows. Binds directly to 23S rRNA. The L1 stalk is quite mobile in the ribosome, and is involved in E site tRNA release. Functionally, protein L1 is also a translational repressor protein, it controls the translation of the L11 operon by binding to its mRNA. The protein is Large ribosomal subunit protein uL1 of Clostridium acetobutylicum (strain ATCC 824 / DSM 792 / JCM 1419 / IAM 19013 / LMG 5710 / NBRC 13948 / NRRL B-527 / VKM B-1787 / 2291 / W).